Here is a 217-residue protein sequence, read N- to C-terminus: Small ribosomal subunit protein uS3 (217 aa).

In terms of domain architecture, KH type-2 spans 38–106 (IRKYIDNALQ…KVHINVIEIK (69 aa)).

This sequence belongs to the universal ribosomal protein uS3 family. In terms of assembly, part of the 30S ribosomal subunit. Forms a tight complex with proteins S10 and S14.

Functionally, binds the lower part of the 30S subunit head. Binds mRNA in the 70S ribosome, positioning it for translation. In Staphylococcus saprophyticus subsp. saprophyticus (strain ATCC 15305 / DSM 20229 / NCIMB 8711 / NCTC 7292 / S-41), this protein is Small ribosomal subunit protein uS3.